A 109-amino-acid chain; its full sequence is NAD(P)H-quinone oxidoreductase subunit M (109 aa).

The protein belongs to the complex I NdhM subunit family. As to quaternary structure, NDH-1 can be composed of about 15 different subunits; different subcomplexes with different compositions have been identified which probably have different functions.

It is found in the cellular thylakoid membrane. The catalysed reaction is a plastoquinone + NADH + (n+1) H(+)(in) = a plastoquinol + NAD(+) + n H(+)(out). The enzyme catalyses a plastoquinone + NADPH + (n+1) H(+)(in) = a plastoquinol + NADP(+) + n H(+)(out). NDH-1 shuttles electrons from an unknown electron donor, via FMN and iron-sulfur (Fe-S) centers, to quinones in the respiratory and/or the photosynthetic chain. The immediate electron acceptor for the enzyme in this species is believed to be plastoquinone. Couples the redox reaction to proton translocation, and thus conserves the redox energy in a proton gradient. Cyanobacterial NDH-1 also plays a role in inorganic carbon-concentration. This chain is NAD(P)H-quinone oxidoreductase subunit M, found in Microcystis aeruginosa (strain NIES-843 / IAM M-2473).